The following is a 347-amino-acid chain: NADH-ubiquinone oxidoreductase chain 2 (347 aa).

Transmembrane regions (helical) follow at residues 1-21 (MNPL…MIVM), 25-45 (HWLT…PILM), 59-79 (YFLT…INLL), 96-116 (IIMT…FWVP), 122-142 (IQLS…MSIL), 145-165 (IFPT…VAIG), 178-198 (IMAY…AYNP), 201-221 (TLLN…MFML), 237-257 (APLL…LPPL), 276-296 (IITP…YMRL), and 326-346 (VSPL…LMLL).

Belongs to the complex I subunit 2 family. In terms of assembly, core subunit of respiratory chain NADH dehydrogenase (Complex I) which is composed of 45 different subunits. Interacts with TMEM242.

It is found in the mitochondrion inner membrane. It catalyses the reaction a ubiquinone + NADH + 5 H(+)(in) = a ubiquinol + NAD(+) + 4 H(+)(out). Functionally, core subunit of the mitochondrial membrane respiratory chain NADH dehydrogenase (Complex I) which catalyzes electron transfer from NADH through the respiratory chain, using ubiquinone as an electron acceptor. Essential for the catalytic activity and assembly of complex I. The polypeptide is NADH-ubiquinone oxidoreductase chain 2 (Boneia bidens (Manado fruit bat)).